A 718-amino-acid chain; its full sequence is Phenylalanine--tRNA ligase beta subunit (718 aa).

A tRNA-binding domain is found at 40–153 (FLNVSKIKFG…KADLKQDPID (114 aa)). Residues 387–462 (DKKESFNFVW…RFYGYENLVF (76 aa)) form the B5 domain. Positions 440, 446, 449, and 450 each coordinate Mg(2+).

The protein belongs to the phenylalanyl-tRNA synthetase beta subunit family. Type 1 subfamily. In terms of assembly, tetramer of two alpha and two beta subunits. Requires Mg(2+) as cofactor.

It localises to the cytoplasm. The enzyme catalyses tRNA(Phe) + L-phenylalanine + ATP = L-phenylalanyl-tRNA(Phe) + AMP + diphosphate + H(+). This Mycoplasmopsis pulmonis (strain UAB CTIP) (Mycoplasma pulmonis) protein is Phenylalanine--tRNA ligase beta subunit.